The chain runs to 556 residues: Transcription factor IIIB 70 kDa subunit (556 aa).

The TFIIB-type zinc-finger motif lies at 8–41; sequence SSRKCKNCGSTDFVRDISNTTNELICKVCGLVTE. The Zn(2+) site is built by C12, C15, C33, and C36. 2 tandem repeats follow at residues 98–174 and 193–272. Residues 98-272 are interaction with TBP and with the Pol III subunit C34; it reads LKAVSYALNI…EETLQQRLNE (175 aa). The tract at residues 284–556 is interaction with TBP; the sequence is KEFRDDETEV…DAINGLFGQK (273 aa). Disordered regions lie at residues 287 to 309 and 477 to 501; these read RDDETEVNEGERSAESKPPSFDK and ADLASGNTSLRKKRSKRTNRNQSSA. Basic and acidic residues predominate over residues 295-309; that stretch reads EGERSAESKPPSFDK. The segment covering 486–495 has biased composition (basic residues); the sequence is LRKKRSKRTN.

The protein belongs to the TFIIB family. As to quaternary structure, TFIIIB comprises the TATA-binding protein (TBP), the B-related factor (BRF) and a 70 kDa polypeptide.

The protein localises to the nucleus. In terms of biological role, general activator of RNA polymerase III transcription. Interacts with TBP. Binds to Pol III subunit C34 and to the TAU135 component of TFIIIC. This is Transcription factor IIIB 70 kDa subunit (TDS4) from Kluyveromyces lactis (strain ATCC 8585 / CBS 2359 / DSM 70799 / NBRC 1267 / NRRL Y-1140 / WM37) (Yeast).